Here is a 307-residue protein sequence, read N- to C-terminus: D-alanine--D-alanine ligase (307 aa).

The ATP-grasp domain occupies 101–301 (KTVMRAAGVS…FGELVRWMVE (201 aa)). ATP is bound at residue 127–182 (PLTPPYVVKPIAEGSSMGVIIVREERSHPPQILASDEWVYGEEVLAETYIAGRELT). Mg(2+) is bound by residues Asp-251, Glu-268, and Asn-270.

This sequence belongs to the D-alanine--D-alanine ligase family. Mg(2+) serves as cofactor. It depends on Mn(2+) as a cofactor.

It is found in the cytoplasm. The catalysed reaction is 2 D-alanine + ATP = D-alanyl-D-alanine + ADP + phosphate + H(+). The protein operates within cell wall biogenesis; peptidoglycan biosynthesis. Cell wall formation. The chain is D-alanine--D-alanine ligase from Methylorubrum populi (strain ATCC BAA-705 / NCIMB 13946 / BJ001) (Methylobacterium populi).